Here is a 200-residue protein sequence, read N- to C-terminus: UPF0488 protein CG14286 (200 aa).

2 disordered regions span residues 1 to 28 (MHKR…PVAE) and 139 to 174 (KDFR…AEAG).

This sequence belongs to the UPF0488 family.

The protein is UPF0488 protein CG14286 of Drosophila melanogaster (Fruit fly).